Consider the following 612-residue polypeptide: Sulfite reductase [NADPH] hemoprotein beta-component (612 aa).

Residues 1-26 (MDDHKPIETPDGPAVDTPGIGARRYE) are disordered. Residues Cys-469, Cys-475, Cys-514, and Cys-518 each coordinate [4Fe-4S] cluster. Cys-518 contributes to the siroheme binding site.

It belongs to the nitrite and sulfite reductase 4Fe-4S domain family. In terms of assembly, alpha(8)-beta(8). The alpha component is a flavoprotein, the beta component is a hemoprotein. Requires siroheme as cofactor. It depends on [4Fe-4S] cluster as a cofactor.

The enzyme catalyses hydrogen sulfide + 3 NADP(+) + 3 H2O = sulfite + 3 NADPH + 4 H(+). It functions in the pathway sulfur metabolism; hydrogen sulfide biosynthesis; hydrogen sulfide from sulfite (NADPH route): step 1/1. In terms of biological role, component of the sulfite reductase complex that catalyzes the 6-electron reduction of sulfite to sulfide. This is one of several activities required for the biosynthesis of L-cysteine from sulfate. This is Sulfite reductase [NADPH] hemoprotein beta-component from Methylorubrum extorquens (strain CM4 / NCIMB 13688) (Methylobacterium extorquens).